We begin with the raw amino-acid sequence, 456 residues long: Cysteine--tRNA ligase (456 aa).

Cys-28 serves as a coordination point for Zn(2+). The 'HIGH' region signature appears at 30–40; it reads ITVYDHCHLGH. Residues Cys-209, His-234, and Glu-238 each coordinate Zn(2+). A 'KMSKS' region motif is present at residues 266 to 270; that stretch reads KMAKS. Lys-269 serves as a coordination point for ATP.

The protein belongs to the class-I aminoacyl-tRNA synthetase family. Monomer. Requires Zn(2+) as cofactor.

The protein resides in the cytoplasm. It carries out the reaction tRNA(Cys) + L-cysteine + ATP = L-cysteinyl-tRNA(Cys) + AMP + diphosphate. The sequence is that of Cysteine--tRNA ligase from Legionella pneumophila (strain Paris).